Consider the following 416-residue polypeptide: Formyl-CoA:oxalate CoA-transferase (416 aa).

CoA-binding positions include 17–18, Arg-38, 72–75, 96–98, His-104, and 137–140; these read QS, LNTK, NFH, and KAYE. The active-site Nucleophile is Asp-169. Residue 248-250 participates in substrate binding; sequence GGQ. A CoA-binding site is contributed by 273-275; it reads QEQ.

Belongs to the CoA-transferase III family. Frc subfamily. In terms of assembly, homodimer.

It catalyses the reaction formyl-CoA + oxalate = oxalyl-CoA + formate. The protein operates within metabolic intermediate degradation; oxalate degradation; CO(2) and formate from oxalate: step 1/2. Involved in the catabolism of oxalate and in the adapatation to low pH via the induction of the oxalate-dependent acid tolerance response (ATR). Catalyzes the transfer of the CoA moiety from formyl-CoA to oxalate. The chain is Formyl-CoA:oxalate CoA-transferase from Escherichia coli (strain ATCC 8739 / DSM 1576 / NBRC 3972 / NCIMB 8545 / WDCM 00012 / Crooks).